Reading from the N-terminus, the 144-residue chain is Maximins 11/H11 (144 aa).

The signal sequence occupies residues 1-18 (MNFKYIVAVSFLIASAYA). Positions 19-43 (RSEENDEQSLSQRDVLEEESLREIR) are excised as a propeptide. An Asparagine amide modification is found at Asn-70. A propeptide spanning residues 74–123 (TAEDHEVMKRLEAVMRDLDSLDYPEEASERETRGFNQEEIANLFTKKEKR) is cleaved from the precursor. Ile-143 is subject to Isoleucine amide.

Belongs to the bombinin family. Expressed by the skin glands.

It localises to the secreted. In terms of biological role, maximin-11 shows antimicrobial activity against bacteria and against the fungus C.albicans. It has little hemolytic activity. Its function is as follows. Maximin-H11 shows antimicrobial activity against bacteria and against the fungus C.albicans. Shows strong hemolytic activity. This Bombina maxima (Giant fire-bellied toad) protein is Maximins 11/H11.